Here is a 542-residue protein sequence, read N- to C-terminus: Hydroxylamine reductase (542 aa).

Residues C3, C6, C15, and C21 each coordinate [4Fe-4S] cluster. 8 residues coordinate hybrid [4Fe-2O-2S] cluster: H238, E262, C307, C398, C426, C451, E485, and K487. The residue at position 398 (C398) is a Cysteine persulfide.

This sequence belongs to the HCP family. It depends on [4Fe-4S] cluster as a cofactor. The cofactor is hybrid [4Fe-2O-2S] cluster.

The protein resides in the cytoplasm. It carries out the reaction A + NH4(+) + H2O = hydroxylamine + AH2 + H(+). Catalyzes the reduction of hydroxylamine to form NH(3) and H(2)O. The polypeptide is Hydroxylamine reductase (Microcystis aeruginosa (strain NIES-843 / IAM M-2473)).